Here is a 206-residue protein sequence, read N- to C-terminus: Small ribosomal subunit protein uS4 (206 aa).

The S4 RNA-binding domain maps to 96 to 156; it reads CRLDNVVYRM…EKAKNQLRIV (61 aa).

It belongs to the universal ribosomal protein uS4 family. Part of the 30S ribosomal subunit. Contacts protein S5. The interaction surface between S4 and S5 is involved in control of translational fidelity.

One of the primary rRNA binding proteins, it binds directly to 16S rRNA where it nucleates assembly of the body of the 30S subunit. In terms of biological role, with S5 and S12 plays an important role in translational accuracy. The chain is Small ribosomal subunit protein uS4 from Pseudomonas savastanoi pv. phaseolicola (strain 1448A / Race 6) (Pseudomonas syringae pv. phaseolicola (strain 1448A / Race 6)).